The primary structure comprises 83 residues: uncharacterized protein (83 aa).

The tract at residues 58–83 (EHGHDDEYDEFSDPNAWVPRRSRDTG) is disordered.

This is an uncharacterized protein from Mycobacterium tuberculosis (strain CDC 1551 / Oshkosh).